The following is a 336-amino-acid chain: Fructose-1,6-bisphosphatase class 1 (336 aa).

Mg(2+) is bound by residues E98, D117, L119, and D120. Residues 120 to 123 (DGSS), N210, and K276 contribute to the substrate site. A Mg(2+)-binding site is contributed by E282.

This sequence belongs to the FBPase class 1 family. In terms of assembly, homotetramer. It depends on Mg(2+) as a cofactor.

It is found in the cytoplasm. It carries out the reaction beta-D-fructose 1,6-bisphosphate + H2O = beta-D-fructose 6-phosphate + phosphate. The protein operates within carbohydrate biosynthesis; gluconeogenesis. The sequence is that of Fructose-1,6-bisphosphatase class 1 from Caulobacter vibrioides (strain ATCC 19089 / CIP 103742 / CB 15) (Caulobacter crescentus).